The primary structure comprises 202 residues: GTP cyclohydrolase-2 (202 aa).

49–53 is a binding site for GTP; sequence RIHSE. Residues Cys-54, Cys-65, and Cys-67 each coordinate Zn(2+). Residues Gln-70, 92–94, and Thr-114 contribute to the GTP site; that span reads EGR. Asp-126 (proton acceptor) is an active-site residue. Arg-128 acts as the Nucleophile in catalysis. Thr-149 and Lys-154 together coordinate GTP.

This sequence belongs to the GTP cyclohydrolase II family. Zn(2+) is required as a cofactor.

It catalyses the reaction GTP + 4 H2O = 2,5-diamino-6-hydroxy-4-(5-phosphoribosylamino)-pyrimidine + formate + 2 phosphate + 3 H(+). The protein operates within cofactor biosynthesis; riboflavin biosynthesis; 5-amino-6-(D-ribitylamino)uracil from GTP: step 1/4. Catalyzes the conversion of GTP to 2,5-diamino-6-ribosylamino-4(3H)-pyrimidinone 5'-phosphate (DARP), formate and pyrophosphate. The polypeptide is GTP cyclohydrolase-2 (Shewanella frigidimarina (strain NCIMB 400)).